The primary structure comprises 199 residues: UPF0462 protein C4orf33 (199 aa).

Belongs to the UPF0462 family.

In Homo sapiens (Human), this protein is UPF0462 protein C4orf33 (C4orf33).